Reading from the N-terminus, the 458-residue chain is ATP synthase subunit beta (458 aa).

ATP is bound at residue 148–155 (GGAGVGKT).

The protein belongs to the ATPase alpha/beta chains family. In terms of assembly, F-type ATPases have 2 components, CF(1) - the catalytic core - and CF(0) - the membrane proton channel. CF(1) has five subunits: alpha(3), beta(3), gamma(1), delta(1), epsilon(1). CF(0) has three main subunits: a(1), b(2) and c(9-12). The alpha and beta chains form an alternating ring which encloses part of the gamma chain. CF(1) is attached to CF(0) by a central stalk formed by the gamma and epsilon chains, while a peripheral stalk is formed by the delta and b chains.

It is found in the cell inner membrane. It carries out the reaction ATP + H2O + 4 H(+)(in) = ADP + phosphate + 5 H(+)(out). Produces ATP from ADP in the presence of a proton gradient across the membrane. The catalytic sites are hosted primarily by the beta subunits. This chain is ATP synthase subunit beta, found in Actinobacillus succinogenes (strain ATCC 55618 / DSM 22257 / CCUG 43843 / 130Z).